A 760-amino-acid chain; its full sequence is General transcription and DNA repair factor IIH helicase subunit XPD (760 aa).

One can recognise a Helicase ATP-binding domain in the interval 7 to 283 (GLLVYFPYDY…KETDEQRLRE (277 aa)). 42–49 (MPSGTGKT) provides a ligand contact to ATP. [4Fe-4S] cluster contacts are provided by Cys116, Cys134, Cys155, and Cys190. Residues 234–237 (DEAH) carry the DEAH box motif. Residues 438–637 (MDASLAIKPV…TQSRILKARL (200 aa)) form a mediates interaction with MMS19 region. The short motif at 682–695 (KRFARADKRGKLPR) is the Nuclear localization signal element.

The protein belongs to the helicase family. RAD3/XPD subfamily. As to quaternary structure, component of the 7-subunit TFIIH core complex composed of XPB/ERCC3, XPD/ERCC2, GTF2H1, GTF2H2, GTF2H3, GTF2H4 and GTF2H5, which is active in NER. The core complex associates with the 3-subunit CDK-activating kinase (CAK) module composed of CCNH/cyclin H, CDK7 and MNAT1 to form the 10-subunit holoenzyme (holo-TFIIH) active in transcription. The interaction with GTF2H2 results in the stimulation of the 5'--&gt;3' helicase activity. Component of the MMXD complex, which includes CIAO1, ERCC2, CIAO2B, MMS19 and SLC25A5. Interacts with CIAO1 and CIAO2B; the interaction WITH CIAO2B is direct. Interacts with ATF7IP. Interacts directly with MMS19. Part of TBP-based Pol II pre-initiation complex (PIC), in which Pol II core assembles with general transcription factors and other specific initiation factors including GTF2E1, GTF2E2, GTF2F1, GTF2F2, TCEA1, ERCC2, ERCC3, GTF2H2, GTF2H3, GTF2H4, GTF2H5, GTF2A1, GTF2A2, GTF2B and TBP; this large multi-subunit PIC complex mediates DNA unwinding and targets Pol II core to the transcription start site where the first phosphodiester bond forms. The cofactor is Mg(2+). It depends on [4Fe-4S] cluster as a cofactor. In terms of processing, ISGylated.

Its subcellular location is the nucleus. The protein localises to the cytoplasm. The protein resides in the cytoskeleton. It localises to the spindle. The catalysed reaction is Couples ATP hydrolysis with the unwinding of duplex DNA at the replication fork by translocating in the 5'-3' direction. This creates two antiparallel DNA single strands (ssDNA). The leading ssDNA polymer is the template for DNA polymerase III holoenzyme which synthesizes a continuous strand.. The enzyme catalyses ATP + H2O = ADP + phosphate + H(+). Functionally, ATP-dependent 5'-3' DNA helicase, component of the general transcription and DNA repair factor IIH (TFIIH) core complex, which is involved in general and transcription-coupled nucleotide excision repair (NER) of damaged DNA and, when complexed to CDK-activating kinase (CAK), involved in transcription by RNA polymerase II. In NER, TFIIH acts by opening DNA around the lesion to allow the excision of the damaged oligonucleotide and its replacement by a new DNA fragment. The ATP-dependent helicase activity of XPD/ERCC2 is required for DNA opening. In transcription, TFIIH has an essential role in transcription initiation. When the pre-initiation complex (PIC) has been established, TFIIH is required for promoter opening and promoter escape. Phosphorylation of the C-terminal tail (CTD) of the largest subunit of RNA polymerase II by the kinase module CAK controls the initiation of transcription. XPD/ERCC2 acts by forming a bridge between CAK and the core-TFIIH complex. Involved in the regulation of vitamin-D receptor activity. As part of the mitotic spindle-associated MMXD complex it plays a role in chromosome segregation. Might have a role in aging process and could play a causative role in the generation of skin cancers. This chain is General transcription and DNA repair factor IIH helicase subunit XPD (ERCC2), found in Bos taurus (Bovine).